The following is a 141-amino-acid chain: Hemoglobin subunit alpha (141 aa).

Positions 1 to 141 constitute a Globin domain; sequence VLSADDKANV…VSTVLTSKYR (141 aa). Phosphoserine is present on Ser3. N6-succinyllysine occurs at positions 7 and 11. N6-acetyllysine; alternate is present on Lys16. Lys16 carries the N6-succinyllysine; alternate modification. At Tyr24 the chain carries Phosphotyrosine. Ser35 is modified (phosphoserine). Lys40 bears the N6-succinyllysine mark. A Phosphoserine modification is found at Ser49. His58 serves as a coordination point for O2. A heme b-binding site is contributed by His87. Ser102 carries the post-translational modification Phosphoserine. Thr108 is modified (phosphothreonine). Ser124 and Ser131 each carry phosphoserine. Thr134 and Thr137 each carry phosphothreonine. Residue Ser138 is modified to Phosphoserine.

Belongs to the globin family. In terms of assembly, heterotetramer of two alpha chains and two beta chains. In terms of tissue distribution, red blood cells.

Involved in oxygen transport from the lung to the various peripheral tissues. The chain is Hemoglobin subunit alpha from Peromyscus californicus (California mouse).